We begin with the raw amino-acid sequence, 178 residues long: uncharacterized protein (178 aa).

This is an uncharacterized protein from Sinorhizobium fredii (strain NBRC 101917 / NGR234).